A 335-amino-acid chain; its full sequence is Biotin synthase (335 aa).

The Radical SAM core domain maps to Asn-51–Arg-278. 3 residues coordinate [4Fe-4S] cluster: Cys-66, Cys-70, and Cys-73. [2Fe-2S] cluster contacts are provided by Cys-110, Cys-141, Cys-201, and Arg-273.

This sequence belongs to the radical SAM superfamily. Biotin synthase family. As to quaternary structure, homodimer. Requires [4Fe-4S] cluster as cofactor. It depends on [2Fe-2S] cluster as a cofactor.

It catalyses the reaction (4R,5S)-dethiobiotin + (sulfur carrier)-SH + 2 reduced [2Fe-2S]-[ferredoxin] + 2 S-adenosyl-L-methionine = (sulfur carrier)-H + biotin + 2 5'-deoxyadenosine + 2 L-methionine + 2 oxidized [2Fe-2S]-[ferredoxin]. It functions in the pathway cofactor biosynthesis; biotin biosynthesis; biotin from 7,8-diaminononanoate: step 2/2. Its function is as follows. Catalyzes the conversion of dethiobiotin (DTB) to biotin by the insertion of a sulfur atom into dethiobiotin via a radical-based mechanism. The chain is Biotin synthase from Bordetella pertussis (strain Tohama I / ATCC BAA-589 / NCTC 13251).